Consider the following 299-residue polypeptide: 4-diphosphocytidyl-2-C-methyl-D-erythritol kinase (299 aa).

The active site involves Lys-17. Residue 99–109 coordinates ATP; sequence PLASGLGGGSS. Asp-142 is an active-site residue.

The protein belongs to the GHMP kinase family. IspE subfamily.

It carries out the reaction 4-CDP-2-C-methyl-D-erythritol + ATP = 4-CDP-2-C-methyl-D-erythritol 2-phosphate + ADP + H(+). Its pathway is isoprenoid biosynthesis; isopentenyl diphosphate biosynthesis via DXP pathway; isopentenyl diphosphate from 1-deoxy-D-xylulose 5-phosphate: step 3/6. Catalyzes the phosphorylation of the position 2 hydroxy group of 4-diphosphocytidyl-2C-methyl-D-erythritol. This is 4-diphosphocytidyl-2-C-methyl-D-erythritol kinase from Deinococcus radiodurans (strain ATCC 13939 / DSM 20539 / JCM 16871 / CCUG 27074 / LMG 4051 / NBRC 15346 / NCIMB 9279 / VKM B-1422 / R1).